We begin with the raw amino-acid sequence, 611 residues long: UvrABC system protein C (611 aa).

Residues 14 to 91 enclose the GIY-YIG domain; it reads TSPGCYIHKD…IKENKPKYNI (78 aa). The 36-residue stretch at 196 to 231 folds into the UVR domain; sequence DQIIEDLRGKMAGAAQTMEFEKAAEYRDLIQSIGTL.

Belongs to the UvrC family. In terms of assembly, interacts with UvrB in an incision complex.

The protein localises to the cytoplasm. In terms of biological role, the UvrABC repair system catalyzes the recognition and processing of DNA lesions. UvrC both incises the 5' and 3' sides of the lesion. The N-terminal half is responsible for the 3' incision and the C-terminal half is responsible for the 5' incision. The chain is UvrABC system protein C from Streptococcus gordonii (strain Challis / ATCC 35105 / BCRC 15272 / CH1 / DL1 / V288).